The chain runs to 466 residues: Cytochrome P450 85A1 (466 aa).

The helical transmembrane segment at 1-21 (MVLAVLIGVLVGIVLVSSLLL) threads the bilayer. Cys-416 serves as a coordination point for heme.

Belongs to the cytochrome P450 family. Requires heme as cofactor.

The protein localises to the membrane. The enzyme catalyses 6-deoxoteasterone + reduced [NADPH--hemoprotein reductase] + O2 = 6alpha-hydroxyteasterone + oxidized [NADPH--hemoprotein reductase] + H2O + H(+). It catalyses the reaction 6alpha-hydroxytyphasterol + reduced [NADPH--hemoprotein reductase] + O2 = teasterone + oxidized [NADPH--hemoprotein reductase] + 2 H2O + H(+). The catalysed reaction is 3-dehydro-6-deoxoteasterone + reduced [NADPH--hemoprotein reductase] + O2 = 3-dehydro-6alpha-hydroxyteasterone + oxidized [NADPH--hemoprotein reductase] + H2O + H(+). It carries out the reaction 3-dehydro-6alpha-hydroxyteasterone + reduced [NADPH--hemoprotein reductase] + O2 = 3-dehydroteasterone + oxidized [NADPH--hemoprotein reductase] + 2 H2O + H(+). The enzyme catalyses 6-deoxotyphasterol + reduced [NADPH--hemoprotein reductase] + O2 = 6alpha-hydroxytyphasterol + oxidized [NADPH--hemoprotein reductase] + H2O + H(+). It catalyses the reaction 6alpha-hydroxytyphasterol + reduced [NADPH--hemoprotein reductase] + O2 = typhasterol + oxidized [NADPH--hemoprotein reductase] + 2 H2O + H(+). The catalysed reaction is 6-deoxocastasterone + reduced [NADPH--hemoprotein reductase] + O2 = 6alpha-hydroxycastasterone + oxidized [NADPH--hemoprotein reductase] + H2O + H(+). It carries out the reaction 6alpha-hydroxycastasterone + reduced [NADPH--hemoprotein reductase] + O2 = castasterone + oxidized [NADPH--hemoprotein reductase] + 2 H2O + H(+). The enzyme catalyses 3-dehydro-6-deoxoteasterone + 2 reduced [NADPH--hemoprotein reductase] + 2 O2 = 3-dehydroteasterone + 2 oxidized [NADPH--hemoprotein reductase] + 3 H2O + 2 H(+). It catalyses the reaction 6-deoxocastasterone + 2 reduced [NADPH--hemoprotein reductase] + 2 O2 = castasterone + 2 oxidized [NADPH--hemoprotein reductase] + 3 H2O + 2 H(+). The catalysed reaction is 6-deoxoteasterone + 2 reduced [NADPH--hemoprotein reductase] + 2 O2 = teasterone + 2 oxidized [NADPH--hemoprotein reductase] + 3 H2O + 2 H(+). It carries out the reaction 6-deoxotyphasterol + 2 reduced [NADPH--hemoprotein reductase] + 2 O2 = typhasterol + 2 oxidized [NADPH--hemoprotein reductase] + 3 H2O + 2 H(+). It participates in plant hormone biosynthesis; brassinosteroid biosynthesis. Its function is as follows. Involved in reduction steps of the biosynthesis of plant campesterol-derivative steroids, ending to castasterone (CS) but missing brassinolide (BL). Catalyzes the C6-oxidation step in brassinosteroids biosynthesis; the conversion of 6-deoxoteasterone (6-deoxoTE) to teasterone (TE), 3-dehydro-6-deoxoteasterone (6-deoxo3DT, 6-deoxo-3-DHT) to 3-dehydroteasterone (3DT, 3-DHT), 6-deoxotyphasterol (6-deoxoTY) to typhasterol (TY) and of 6-deoxocastasterone (6-deoxoCS) to castasterone (CS). The protein is Cytochrome P450 85A1 of Brachypodium distachyon (Purple false brome).